Here is a 481-residue protein sequence, read N- to C-terminus: MFS transporter eqxG (481 aa).

Positions 1–13 (MATTDPAIAAPDD) are enriched in low complexity. Positions 1 to 58 (MATTDPAIAAPDDSQLEAGRENIRANVGDALEKPSSSTGTMVDEPTDPNVVDWDGPHD) are disordered. The N-linked (GlcNAc...) asparagine glycan is linked to N64. The chain crosses the membrane as a helical span at residues 72 to 92 (LHLVIVSLFTLAANLAATMFA). N106 carries N-linked (GlcNAc...) asparagine glycosylation. 10 consecutive transmembrane segments (helical) span residues 111-131 (AMTV…LAPL), 146-166 (FVYV…MFLV), 169-189 (IICG…VADL), 201-221 (LFTV…TVIF), 276-296 (PIVL…FLLF), 315-335 (GLAY…FSVL), 353-373 (LILM…YGWT), 380-400 (WIVP…VVIP), 403-423 (IYLV…ANLL), and 439-459 (LYVS…CLLF).

The protein belongs to the major facilitator superfamily.

Its subcellular location is the cell membrane. Efflux pump that might be required for efficient secretion of equisetin or other secondary metabolies produced by the equisetin gene cluster. The sequence is that of MFS transporter eqxG from Fusarium heterosporum.